Reading from the N-terminus, the 282-residue chain is Tyrosine recombinase XerA (282 aa).

One can recognise a Core-binding (CB) domain in the interval 2-79 (SEPNEVIEEF…ALRAYFRFEG (78 aa)). The Tyr recombinase domain occupies 95-271 (SLPKALTREE…TVEHLRKAQE (177 aa)). Residues arginine 132, lysine 157, histidine 223, arginine 226, and histidine 249 contribute to the active site. Tyrosine 258 (O-(3'-phospho-DNA)-tyrosine intermediate) is an active-site residue.

It belongs to the 'phage' integrase family. XerA subfamily.

The protein resides in the cytoplasm. In terms of biological role, site-specific tyrosine recombinase, which acts by catalyzing the cutting and rejoining of the recombining DNA molecules. This is Tyrosine recombinase XerA from Thermococcus kodakarensis (strain ATCC BAA-918 / JCM 12380 / KOD1) (Pyrococcus kodakaraensis (strain KOD1)).